The following is an 842-amino-acid chain: MQEVHQTPMMKQYFSIKADYPDAFLFYRLGDFYELFFEDAQIVAKELELTLTSKNGKQAEHPIPMCGVPHHSAAIYIEQLIEKGFNVAICEQTEDPKATKGLVKREVIQVITPGTYMASLSEKENRYLVAISDVAGRFGIARGDVTTGESWLTTLSSEEAVLREIEGLLPNEVIVEDERLADLLRQTGIPLSIQVDKRESTLAQGAKDEAQRSAFELLFAYLTKTQKRSLDHLQPAVAYEVEQHMQLDANTARNLELFRSARSGERKGSLLSLLDETTTAMGGRLLKRWLEQPLYTEQGIRERQDAVENLVDDFMLRDQLQEELKRVYDIERLVAKVGYGTANARDLVQLRDTLERMPSVRSLLQTVKADRLQQIEQNLDSFETLSEQLRAALVDSPPISTKEGGMIRHGYSDELDELLEAKANGKSWIANLEQQERIATGIKSLKVGYNRVFGYYLEVTKANAKLLEEGRYERKQTLTNAERYITPELKEKEALILGAEEKSCTLEYDLFVALREEVKTYTKPLQQLARSLSELDVLLALAVVAEKREYVRPVTTSHVQIERGRHPVIETVLPRGEYVANDLTLDDTRQMLLITGPNMSGKSTYMRQFALIAILHQIGSFVPAEAAELPLFDRIFTRIGAADDLVSGQSTFMVEMTETRQAVTEATSNSLILLDEIGRGTSTYDGMALAQAIVEYIASSIGAKTLFSTHYHELTVLEDSIPSLENVHVRAIERDGRVVFLHEVHPGRADKSYGIHVAELAELPDSLIDRARTILSELESEATKPALNEQSAPPQVEEVSQLSLFESNDAVREQLLKLDLLAMNPIEAMQALYELQQTAKKG.

596 to 603 (GPNMSGKS) provides a ligand contact to ATP.

This sequence belongs to the DNA mismatch repair MutS family.

This protein is involved in the repair of mismatches in DNA. It is possible that it carries out the mismatch recognition step. This protein has a weak ATPase activity. In Exiguobacterium sp. (strain ATCC BAA-1283 / AT1b), this protein is DNA mismatch repair protein MutS.